The sequence spans 496 residues: Flt3-interacting zinc finger protein 1 (496 aa).

At methionine 1 the chain carries N-acetylmethionine. 6 consecutive C2H2-type zinc fingers follow at residues 23–45 (FHCS…FARH), 51–73 (HACP…LRSH), 79–101 (YRCS…QVVH), 107–130 (YCCL…KRQH), 200–222 (FACG…WAAH), and 228–250 (FKCP…KLTH). The interval 250-280 (HDLQGPGAPPAQAWAAGPGAGPETAGEGTAA) is disordered. Residues 259–280 (PAQAWAAGPGAGPETAGEGTAA) are compositionally biased toward low complexity. 5 consecutive C2H2-type zinc fingers follow at residues 331–352 (YQCD…LEAH), 358–381 (YGCG…RVSH), 414–436 (FGCS…VLVH), 442–464 (FPCL…RLLH), and 470–492 (FPCH…LKLH). Positions 378–412 (RVSHGEGGGEEAATAAREREPASGEPPSGSGRGKK) are disordered.

As to quaternary structure, interacts with FLT3 cytoplasmic catalytic domain, following receptor stimulation, in a kinase-independent manner. Does not interact with other structurally related receptor tyrosine kinases, including KIT, CSF1R and PDGFR. Interacts with NRL. As to expression, widely expressed.

It is found in the cytoplasm. The protein resides in the nucleus. In terms of biological role, may be a transcriptional repressor of NRL function in photoreceptors. Does not repress CRX-mediated transactivation. The polypeptide is Flt3-interacting zinc finger protein 1 (FIZ1) (Homo sapiens (Human)).